The primary structure comprises 359 residues: MNIKQLVRKNIQELQPYQSARTIGGKGDIWLNANECPTFNRLKLENIFLNRYPECQPRELLLRYSSYIGLDKKNILITRGSDEAIELLIKTFCEPQCDRIVFCPPTYDMYNVSANIMGVECLQIPLLNHSWQLDLKVIKKCINNFKLIYLCNPNNPTGSLINFRDVLALLKMTYGKSLVIIDEAYIEFSPMNSLVNLISQYSNLVVLRTLSKAFSLAGLRCGFVLANFSVIKFLLKVINPYPISTPTSSIAIQFLSNINISKMQDRVFSLILNRCWLINELKLISNCIDHIFYSASNYVLVRFRNSNKVFHELSNQGIIVRDQSKKINLKNCIRISIGTSQECLKVIHAIRKIDCLYVN.

The residue at position 212 (K212) is an N6-(pyridoxal phosphate)lysine.

Belongs to the class-II pyridoxal-phosphate-dependent aminotransferase family. Histidinol-phosphate aminotransferase subfamily. In terms of assembly, homodimer. Pyridoxal 5'-phosphate is required as a cofactor.

It catalyses the reaction L-histidinol phosphate + 2-oxoglutarate = 3-(imidazol-4-yl)-2-oxopropyl phosphate + L-glutamate. It functions in the pathway amino-acid biosynthesis; L-histidine biosynthesis; L-histidine from 5-phospho-alpha-D-ribose 1-diphosphate: step 7/9. The polypeptide is Histidinol-phosphate aminotransferase (Buchnera aphidicola subsp. Schlechtendalia chinensis).